Reading from the N-terminus, the 895-residue chain is Stonin-2 (895 aa).

Disordered regions lie at residues 15–119, 145–222, and 234–280; these read WVSF…PPHK, SESS…APPV, and EDNE…KSTL. Residues 64–73 are compositionally biased toward basic and acidic residues; the sequence is SHSEQDDSSE. Polar residues predominate over residues 145 to 193; sequence SESSWTTHSEDTSSPSVAPSYTDLQLINTEEQASGRASGTDSTDNSSSL. Residues 241–251 show a composition bias toward pro residues; that stretch reads PSPPVPSPKKP. Phosphothreonine is present on Thr-253. Phosphoserine occurs at positions 278 and 299. 2 short sequence motifs (NPF) span residues 310–312 and 326–328; these read NPF. The disordered stretch occupies residues 386–421; that stretch reads QIDDPDPVGNTALPDDDPTASVELDAPSPASALSQP. Residues 424 to 557 enclose the SHD domain; it reads GWPMMLRIPE…DLPVLSMDLS (134 aa). The MHD domain maps to 565–872; sequence EEEITVDVRD…AHYSYKVEIE (308 aa). Position 759 is a phosphoserine (Ser-759).

The protein belongs to the Stoned B family. Interacts with the second C2 domain of synaptotagmins SYT1 and SYT2. Interacts with EPS15, EPS15R and ITSN1. Interacts indirectly with the AP-2 adapter complex. Interacts with TOR1A and COPS4; the interaction controls STON2 protein stability. In terms of processing, phosphorylated in vitro by PKD. Post-translationally, neddylated; deneddylated via its interaction with the COP9 signalosome (CSN) complex through TOR1A and COPS4. Ubiquitinated; leading to its degradation.

It is found in the cytoplasm. Its subcellular location is the membrane. It localises to the synapse. The protein resides in the synaptosome. In terms of biological role, adapter protein involved in endocytic machinery. Involved in the synaptic vesicle recycling. May facilitate clathrin-coated vesicle uncoating. This chain is Stonin-2 (Ston2), found in Mus musculus (Mouse).